The following is a 141-amino-acid chain: Superoxide dismutase [Cu-Zn], chloroplastic (141 aa).

Cu cation contacts are provided by histidine 33, histidine 35, and histidine 50. A disulfide bridge connects residues cysteine 44 and cysteine 133. Zn(2+) is bound by residues histidine 50, histidine 58, histidine 67, and aspartate 70. Histidine 107 is a Cu cation binding site.

It belongs to the Cu-Zn superoxide dismutase family. As to quaternary structure, homotetramer. It depends on Cu cation as a cofactor. Zn(2+) is required as a cofactor.

It localises to the plastid. Its subcellular location is the chloroplast. The catalysed reaction is 2 superoxide + 2 H(+) = H2O2 + O2. Its function is as follows. Destroys radicals which are normally produced within the cells and which are toxic to biological systems. The polypeptide is Superoxide dismutase [Cu-Zn], chloroplastic (SODCP) (Pinus sylvestris (Scotch pine)).